We begin with the raw amino-acid sequence, 373 residues long: Probable tRNA sulfurtransferase (373 aa).

The THUMP domain maps to 54-158; that stretch reads NKNIEELSKV…NDVAYFYHKI (105 aa). ATP-binding positions include 176-177, 201-202, Lys-256, Gly-278, and Gln-287; these read LF and NF.

This sequence belongs to the ThiI family.

Its subcellular location is the cytoplasm. It catalyses the reaction [ThiI sulfur-carrier protein]-S-sulfanyl-L-cysteine + a uridine in tRNA + 2 reduced [2Fe-2S]-[ferredoxin] + ATP + H(+) = [ThiI sulfur-carrier protein]-L-cysteine + a 4-thiouridine in tRNA + 2 oxidized [2Fe-2S]-[ferredoxin] + AMP + diphosphate. The enzyme catalyses [ThiS sulfur-carrier protein]-C-terminal Gly-Gly-AMP + S-sulfanyl-L-cysteinyl-[cysteine desulfurase] + AH2 = [ThiS sulfur-carrier protein]-C-terminal-Gly-aminoethanethioate + L-cysteinyl-[cysteine desulfurase] + A + AMP + 2 H(+). It participates in cofactor biosynthesis; thiamine diphosphate biosynthesis. In terms of biological role, catalyzes the ATP-dependent transfer of a sulfur to tRNA to produce 4-thiouridine in position 8 of tRNAs, which functions as a near-UV photosensor. Also catalyzes the transfer of sulfur to the sulfur carrier protein ThiS, forming ThiS-thiocarboxylate. This is a step in the synthesis of thiazole, in the thiamine biosynthesis pathway. The sulfur is donated as persulfide by IscS. In Saccharolobus islandicus (strain M.16.27) (Sulfolobus islandicus), this protein is Probable tRNA sulfurtransferase.